The primary structure comprises 419 residues: UDP-N-acetylglucosamine 1-carboxyvinyltransferase (419 aa).

Position 22–23 (lysine 22–asparagine 23) interacts with phosphoenolpyruvate. Arginine 95 is a binding site for UDP-N-acetyl-alpha-D-glucosamine. Residue cysteine 119 is the Proton donor of the active site. A 2-(S-cysteinyl)pyruvic acid O-phosphothioketal modification is found at cysteine 119. UDP-N-acetyl-alpha-D-glucosamine is bound by residues lysine 164–valine 167, aspartate 308, and isoleucine 330.

This sequence belongs to the EPSP synthase family. MurA subfamily.

The protein resides in the cytoplasm. The enzyme catalyses phosphoenolpyruvate + UDP-N-acetyl-alpha-D-glucosamine = UDP-N-acetyl-3-O-(1-carboxyvinyl)-alpha-D-glucosamine + phosphate. Its pathway is cell wall biogenesis; peptidoglycan biosynthesis. Functionally, cell wall formation. Adds enolpyruvyl to UDP-N-acetylglucosamine. This chain is UDP-N-acetylglucosamine 1-carboxyvinyltransferase, found in Rickettsia rickettsii (strain Iowa).